Reading from the N-terminus, the 385-residue chain is UPF0284 protein A9601_04941 (385 aa).

Belongs to the UPF0284 family.

The protein is UPF0284 protein A9601_04941 of Prochlorococcus marinus (strain AS9601).